The sequence spans 241 residues: Ribose-5-phosphate isomerase A (241 aa).

Residues 28–31, 83–86, and 96–99 contribute to the substrate site; these read TGST, DGAD, and KGGG. Residue E105 is the Proton acceptor of the active site. K123 contacts substrate.

The protein belongs to the ribose 5-phosphate isomerase family. In terms of assembly, homodimer.

The enzyme catalyses aldehydo-D-ribose 5-phosphate = D-ribulose 5-phosphate. Its pathway is carbohydrate degradation; pentose phosphate pathway; D-ribose 5-phosphate from D-ribulose 5-phosphate (non-oxidative stage): step 1/1. In terms of biological role, catalyzes the reversible conversion of ribose-5-phosphate to ribulose 5-phosphate. This is Ribose-5-phosphate isomerase A from Rhodopseudomonas palustris (strain BisA53).